Reading from the N-terminus, the 273-residue chain is Large ribosomal subunit protein uL2cz/uL2cy (273 aa).

2 disordered regions span residues 1-23 (MAIHLYKTSTPSTRNGAVDSQVK) and 224-273 (NPVD…RRRK).

Belongs to the universal ribosomal protein uL2 family. In terms of assembly, part of the 50S ribosomal subunit.

The protein resides in the plastid. It is found in the chloroplast. The sequence is that of Large ribosomal subunit protein uL2cz/uL2cy (rpl2-A) from Amborella trichopoda.